Consider the following 66-residue polypeptide: Conotoxin Cl14.1a (66 aa).

Positions Met1–Gly19 are cleaved as a signal peptide. The propeptide occupies Phe20–Arg49.

It belongs to the conotoxin L superfamily. Contains 2 disulfide bonds. In terms of tissue distribution, expressed by the venom duct.

The protein resides in the secreted. Its function is as follows. Probable neurotoxin with unknown target. Possibly targets ion channels. This peptide could be considered as an apoptosis activator in some cancers (tested on lung and breast cancer cell lines). Provokes the decrease of H1299 lung cancer cells viability after 24 hours treatment, and induces a high Bax/Bcl-2 ratio, which suggests that this peptide can activate apoptosis in H1299 cells. In addition, H1299 and H1437 lung cancer cell lines treated with this peptide have decreased cell viability, activated caspases, and reduced expression of the pro-survival protein NF-kappa-B (NFKB1), indicating activation of apoptosis. In synergy with MicroRNA-101-3p, this synthetic peptide inhibits breast cancer cells (SK-BR-3 and MCF-7) migration, invasion, and proliferation through suppressing the expression of the methyltransferase EZH2. In parallel, this synergy treatment is able to promote the apoptosis of breast cancer cells. Against microbes, this synthetic toxin (at micromolar concentrations) lowers viability and inhibits host cell invasion by the opportunistic parasite Toxoplasma gondii (tachyzoite form). In addition, it permits T.gondii intracellular replication to decrease while viability of the host cell is unaffected. This chain is Conotoxin Cl14.1a, found in Californiconus californicus (California cone).